A 103-amino-acid chain; its full sequence is Small ribosomal subunit protein uS10 (103 aa).

Belongs to the universal ribosomal protein uS10 family. As to quaternary structure, part of the 30S ribosomal subunit.

Involved in the binding of tRNA to the ribosomes. This chain is Small ribosomal subunit protein uS10, found in Shewanella baltica (strain OS223).